We begin with the raw amino-acid sequence, 25 residues long: Flagellar filament core protein flaB1 (25 aa).

This sequence belongs to the bacterial flagellin family. In terms of assembly, the flagellum consists of an outer layer composed of two sheath proteins, flaA1 (44 kDa) and flaA2 (35 kDa) around a core that contains three proteins flaB1 (37 kDa), flaB2 (34 kDa) and flaB3 (32 kDa).

Its subcellular location is the periplasmic flagellum. It localises to the periplasm. Component of the core of the flagella. The chain is Flagellar filament core protein flaB1 (flaB1) from Brachyspira hyodysenteriae (Treponema hyodysenteriae).